Reading from the N-terminus, the 1039-residue chain is Tetratricopeptide repeat protein 1 (1039 aa).

12 TPR repeats span residues 51–84, 175–208, 210–243, 251–288, 326–359, 361–393, 437–469, 514–547, 634–667, 701–734, 737–770, and 799–832; these read REFWTKFAHEYYIRGLREQAILILKSGLETLKDS, ILGFLGKARILYAKGNYRSALKLYQRALVSNPQF, PDPRIGIGLCFWNLDMKTDALSAWTRVQQLDPKN, GLYYYDLAFQNVNNDSFVQNYGKALQHIQRAFKTRNND, ADGYYWMGRAYHQMGNNEKAMASYQKAKAADDRH, LSSVGIGQIQILQNDLTSAKLTFERIAEQNQSC, SDLYITQARLWEKEDTKKSLGFLTRALDFLESA, LLLDYNLARCEEELGNTSVASEAYVSILEKHPSF, EFRVHNDREKLKRQKLYIKAIQSYDQAIKFDPKN, ATTLINIGNCLAELKQFSRAIEVFETVYSSTGES, YGVLSCLGRVWLQRGRESKNVDYLKESVRYATLA, and PENSRTVEDLNFAMQQLDASIETFTKLVSVEHPP. The stretch at 838-929 forms a coiled coil; that stretch reads IEQRAKMAKN…SQQKASEDDM (92 aa). Residues 912 to 1039 are disordered; that stretch reads EEVLEWRKSQ…LNLFSEEDEE (128 aa). The span at 927 to 936 shows a compositional bias: acidic residues; sequence DDMSLSDDEE. Ser930 and Ser932 each carry phosphoserine. The span at 940-953 shows a compositional bias: basic residues; that stretch reads GKKKKKDRKKRKSK. 4 positions are modified to phosphoserine: Ser959, Ser961, Ser964, and Ser998. The span at 992–1006 shows a compositional bias: acidic residues; that stretch reads YTFDQDSDAEGNQEE. Over residues 1007–1018 the composition is skewed to basic and acidic residues; that stretch reads EVSRTIEEKQDN.

In terms of biological role, involved in promoting potassiumm ion uptake. The sequence is that of Tetratricopeptide repeat protein 1 (tpr1) from Schizosaccharomyces pombe (strain 972 / ATCC 24843) (Fission yeast).